The sequence spans 302 residues: 33 kDa chaperonin (302 aa).

Intrachain disulfides connect Cys247–Cys249 and Cys280–Cys283.

The protein belongs to the HSP33 family. In terms of processing, under oxidizing conditions two disulfide bonds are formed involving the reactive cysteines. Under reducing conditions zinc is bound to the reactive cysteines and the protein is inactive.

It is found in the cytoplasm. Its function is as follows. Redox regulated molecular chaperone. Protects both thermally unfolding and oxidatively damaged proteins from irreversible aggregation. Plays an important role in the bacterial defense system toward oxidative stress. This chain is 33 kDa chaperonin, found in Prochlorococcus marinus (strain MIT 9301).